The primary structure comprises 76 residues: Small ribosomal subunit protein uS17 (76 aa).

The protein belongs to the universal ribosomal protein uS17 family. Part of the 30S ribosomal subunit.

Functionally, one of the primary rRNA binding proteins, it binds specifically to the 5'-end of 16S ribosomal RNA. The polypeptide is Small ribosomal subunit protein uS17 (Ruegeria sp. (strain TM1040) (Silicibacter sp.)).